The chain runs to 321 residues: MIQDNFFPLFPHKHLLAIKDLSVQDLNTLLDRAEANVILSNKIDKTKSILRGRTQINLFFEASTRTQSSFELAGKRLGADVISVAIGNSSVKKGETLFDTAATLNAMKPDILVFRHSSAGAAALLAQKVDCCVINAGDGAHEHPTQALLDALTIKRAKGRIEGLTVAICGDILHSRVARSNILSLNALGARVRAVAPSTLLPTEINHMSVEVFNTMKDGLKDADVIMMLRLQHERMTGSFIPSTREYFHYFGLHKENLTYAKNNCIILHPGPINRGVEIASDIADGPQSMIRTQVEMGIAVRMAVMEALLDSRLKINGEKK.

Residues Arg-65 and Thr-66 each coordinate carbamoyl phosphate. Lys-93 contributes to the L-aspartate binding site. Carbamoyl phosphate-binding residues include Arg-115, His-143, and Gln-146. L-aspartate contacts are provided by Arg-176 and Arg-230. Residues Gly-271 and Pro-272 each coordinate carbamoyl phosphate.

This sequence belongs to the aspartate/ornithine carbamoyltransferase superfamily. ATCase family. Heterododecamer (2C3:3R2) of six catalytic PyrB chains organized as two trimers (C3), and six regulatory PyrI chains organized as three dimers (R2).

The enzyme catalyses carbamoyl phosphate + L-aspartate = N-carbamoyl-L-aspartate + phosphate + H(+). It participates in pyrimidine metabolism; UMP biosynthesis via de novo pathway; (S)-dihydroorotate from bicarbonate: step 2/3. Catalyzes the condensation of carbamoyl phosphate and aspartate to form carbamoyl aspartate and inorganic phosphate, the committed step in the de novo pyrimidine nucleotide biosynthesis pathway. The polypeptide is Aspartate carbamoyltransferase catalytic subunit (Bartonella tribocorum (strain CIP 105476 / IBS 506)).